The primary structure comprises 347 residues: Tetracycline resistance determinant (347 aa).

A run of 8 helical transmembrane segments spans residues 3–20 (VLGA…LIVA), 30–52 (SPAA…PVEL), 73–95 (CSAV…PLFL), 108–130 (LVVI…LIAS), 137–156 (LAIV…ATTG), 161–183 (MWGI…TVIT), 204–226 (CAGQ…AVAL), and 294–316 (GFHI…TWFL). The segment at 321–347 (EETAPEEERPAESGAGAKNGPLPASDA) is disordered.

It belongs to the major facilitator superfamily. TCR/Tet family.

Its subcellular location is the cell membrane. Its function is as follows. Resistance to tetracycline by an active tetracycline efflux. This is an energy-dependent process that decreases the accumulation of the antibiotic in whole cells. This protein functions as a metal-tetracycline/H(+) antiporter. The protein is Tetracycline resistance determinant (tetB) of Streptomyces rimosus.